The sequence spans 427 residues: Enolase (427 aa).

Gln163 serves as a coordination point for (2R)-2-phosphoglycerate. Glu205 serves as the catalytic Proton donor. 3 residues coordinate Mg(2+): Asp242, Glu285, and Asp312. (2R)-2-phosphoglycerate contacts are provided by Lys337, Arg366, Ser367, and Lys388. Residue Lys337 is the Proton acceptor of the active site.

This sequence belongs to the enolase family. Mg(2+) is required as a cofactor.

Its subcellular location is the cytoplasm. The protein localises to the secreted. The protein resides in the cell surface. It catalyses the reaction (2R)-2-phosphoglycerate = phosphoenolpyruvate + H2O. It functions in the pathway carbohydrate degradation; glycolysis; pyruvate from D-glyceraldehyde 3-phosphate: step 4/5. Catalyzes the reversible conversion of 2-phosphoglycerate (2-PG) into phosphoenolpyruvate (PEP). It is essential for the degradation of carbohydrates via glycolysis. The protein is Enolase of Dechloromonas aromatica (strain RCB).